The chain runs to 249 residues: Domoic acid biosynthesis cluster protein B (249 aa).

Functionally, unknown function: part of the gene cluster that mediates the biosynthesis of domoic acid (DA) and derivatives, natural products with neurochemical activity acting as ionotropic glutamate receptor (iGluR) agonists, thus being neurotoxins causing amnesic shellfish poisoning (ASP). This is Domoic acid biosynthesis cluster protein B from Pseudo-nitzschia multiseries (Marine planktonic diatom).